Here is a 223-residue protein sequence, read N- to C-terminus: Small ribosomal subunit protein uS3 (223 aa).

The KH type-2 domain occupies 38–106; it reads IRKFLDEKLK…QVHINIVEIK (69 aa).

This sequence belongs to the universal ribosomal protein uS3 family. As to quaternary structure, part of the 30S ribosomal subunit. Forms a tight complex with proteins S10 and S14.

Its function is as follows. Binds the lower part of the 30S subunit head. Binds mRNA in the 70S ribosome, positioning it for translation. The chain is Small ribosomal subunit protein uS3 from Lactobacillus delbrueckii subsp. bulgaricus (strain ATCC 11842 / DSM 20081 / BCRC 10696 / JCM 1002 / NBRC 13953 / NCIMB 11778 / NCTC 12712 / WDCM 00102 / Lb 14).